Here is a 174-residue protein sequence, read N- to C-terminus: SUSHI domain-containing protein E3 (174 aa).

A signal peptide spans 1–20 (MATEVQFACALVVLLGCGYA). In terms of domain architecture, Sushi spans 35 to 97 (QNCTTYPSIE…WTNGPPSCVK (63 aa)). Intrachain disulfides connect C37-C78 and C64-C95. The span at 108-127 (STSTTPVTTGTFPDPQNTTH) shows a compositional bias: low complexity. A disordered region spans residues 108 to 133 (STSTTPVTTGTFPDPQNTTHPTHHTV). The helical transmembrane segment at 145–165 (FGYTPWAIITLVVIILLVVWI) threads the bilayer.

The protein resides in the host membrane. The polypeptide is SUSHI domain-containing protein E3 (E3) (Equine herpesvirus 2 (strain 86/87) (EHV-2)).